The primary structure comprises 303 residues: Acetaldehyde dehydrogenase 1 (303 aa).

Cys-130 serves as the catalytic Acyl-thioester intermediate. NAD(+) contacts are provided by residues 161–169 (SVGPGTRKN) and Asn-272.

It belongs to the acetaldehyde dehydrogenase family.

It carries out the reaction acetaldehyde + NAD(+) + CoA = acetyl-CoA + NADH + H(+). The sequence is that of Acetaldehyde dehydrogenase 1 from Cupriavidus metallidurans (strain ATCC 43123 / DSM 2839 / NBRC 102507 / CH34) (Ralstonia metallidurans).